The following is an 810-amino-acid chain: MQSLFSNKYKFKDTEEKLNAYWDKIKLYKWKNLQGKQFIIDTPPPTISGQLHIGHVFSYCHTDFIARYQRMLGKDVLYPIGFDDNGLPTERLVEKIKKVRAADIDRKEFKALCNEVSAKFRMEFKILFQSLGISYDWDLEYHTISEEIQKLSQMSFIALYNMGKIYRKLQPIFWDCADRTAIARVEVEEKEMSSFMSTIAFSTEAGELINIATTRPELMPACVALFFNPLDIRYQHLQGQYAIVPIFGNKVPILSDEQVKIDKGTGLVMCCTFGDELDVYWWNKHNLNTQIIISKSGTLDLKHNIAETDTLSGKLHGVSIVEARKLVLETLSKCNLLIKKEEILHNVKCAERSGMPIEILLSNQWFIKVVEIKHELLEQVRKINWYPQSMRKQIEMWIDGLNWDWCISRQRYFGIPFPVWYSKRDNEEIIIPDVNELPIDPTETLPQGYSKEEVEADVDVMDTWATSSLSPQFNSIHTGINSIPLIPASLRAQSHEIIRSWAFYTILQAYYHHNSIPWENIMVSGWCLAADKSKMSKSKGNALIPNQLLQEYGADVIRYWAANSRLGSDTVFSDEVLQLGKRLVTKLWNASKFVSMFVSQCQIPDLNCVTETMDKWVLTKLYKVIVKATESFNVFEYCVALDYIESFFWKDFCDNYLELVKKRAYGESVTNKENLSAVNTLSFVLMALLKMLAPFMPYITEEIYSTLYNNGSIHDHDNWPVVNTSLCNEMDEQLGEDFIEILNQVRKIKANAQLSVKCKIYKLIINSENYDFPTSWENDLKAVCNAEHIVQDKRTSYYNDKFLISVQFAN.

The 'HIGH' region motif lies at 45–55 (PTISGQLHIGH). Residues 534 to 538 (KMSKS) carry the 'KMSKS' region motif. Lys-537 is a binding site for ATP.

Belongs to the class-I aminoacyl-tRNA synthetase family. ValS type 2 subfamily. In terms of assembly, monomer.

It localises to the cytoplasm. It carries out the reaction tRNA(Val) + L-valine + ATP = L-valyl-tRNA(Val) + AMP + diphosphate. Its function is as follows. Catalyzes the attachment of valine to tRNA(Val). As ValRS can inadvertently accommodate and process structurally similar amino acids such as threonine, to avoid such errors, it has a 'posttransfer' editing activity that hydrolyzes mischarged Thr-tRNA(Val) in a tRNA-dependent manner. In Ehrlichia ruminantium (strain Welgevonden), this protein is Valine--tRNA ligase.